A 79-amino-acid chain; its full sequence is RNA-binding protein Hfq (79 aa).

The Sm domain occupies 10–69 (DPFLNALRKEHVPVSIYLVNGIKLQGNIESFDQYVVLLRNTVTQMVYKHAISTVVPARPV).

The protein belongs to the Hfq family. Homohexamer.

Functionally, RNA chaperone that binds small regulatory RNA (sRNAs) and mRNAs to facilitate mRNA translational regulation in response to envelope stress, environmental stress and changes in metabolite concentrations. Also binds with high specificity to tRNAs. This is RNA-binding protein Hfq from Burkholderia mallei (strain ATCC 23344).